A 123-amino-acid chain; its full sequence is Galanin peptides (123 aa).

An N-terminal signal peptide occupies residues 1 to 19 (MPRGSVLLLASLLLAAALS). A propeptide spanning residues 20–30 (ATLGLGSPVKE) is cleaved from the precursor. Basic and acidic residues predominate over residues 53 to 66 (SFQDKHGLAGKREL). The segment at 53–79 (SFQDKHGLAGKRELEPEDEARPGSFDR) is disordered. At Ala-61 the chain carries Alanine amide. Position 116 is a phosphoserine (Ser-116).

Belongs to the galanin family.

It is found in the secreted. In terms of biological role, endocrine hormone of the central and peripheral nervous systems that binds and activates the G protein-coupled receptors GALR1, GALR2, and GALR3. This small neuropeptide may regulate diverse physiologic functions including contraction of smooth muscle of the gastrointestinal and genitourinary tract, growth hormone and insulin release and adrenal secretion. This chain is Galanin peptides (GAL), found in Bos taurus (Bovine).